The primary structure comprises 230 residues: Ureidoacrylate amidohydrolase RutB (230 aa).

The Proton acceptor role is filled by Asp24. Lys133 is a catalytic residue. Cys166 (nucleophile) is an active-site residue.

This sequence belongs to the isochorismatase family. RutB subfamily.

It catalyses the reaction (Z)-3-ureidoacrylate + H2O + H(+) = (Z)-3-aminoacrylate + NH4(+) + CO2. The catalysed reaction is (Z)-3-ureidoacrylate + H2O = (Z)-3-aminoacrylate + carbamate + H(+). It carries out the reaction (Z)-2-methylureidoacrylate + H2O + H(+) = (Z)-2-methylaminoacrylate + NH4(+) + CO2. Its function is as follows. Hydrolyzes ureidoacrylate to form aminoacrylate and carbamate. The carbamate hydrolyzes spontaneously, thereby releasing one of the nitrogen atoms of the pyrimidine ring as ammonia and one of its carbon atoms as CO2. The chain is Ureidoacrylate amidohydrolase RutB from Escherichia coli (strain K12 / MC4100 / BW2952).